The primary structure comprises 41 residues: Conotoxin Bu22 (41 aa).

Positions 1 to 25 are excised as a propeptide; that stretch reads SDRASDGRNAAANDRASDLVALTVR. Disulfide bonds link Cys-27-Cys-33 and Cys-28-Cys-40.

Belongs to the conotoxin A superfamily. In terms of tissue distribution, expressed by the venom duct.

It localises to the secreted. In Conus bullatus (Bubble cone), this protein is Conotoxin Bu22.